The sequence spans 233 residues: 5'-methylthioadenosine/S-adenosylhomocysteine nucleosidase (233 aa).

The active-site Proton acceptor is Glu-12. Substrate-binding positions include Gly-78, Ile-156, and 177 to 178; that span reads ME. Asp-201 functions as the Proton donor in the catalytic mechanism.

This sequence belongs to the PNP/UDP phosphorylase family. MtnN subfamily.

The catalysed reaction is S-adenosyl-L-homocysteine + H2O = S-(5-deoxy-D-ribos-5-yl)-L-homocysteine + adenine. The enzyme catalyses S-methyl-5'-thioadenosine + H2O = 5-(methylsulfanyl)-D-ribose + adenine. It catalyses the reaction 5'-deoxyadenosine + H2O = 5-deoxy-D-ribose + adenine. It functions in the pathway amino-acid biosynthesis; L-methionine biosynthesis via salvage pathway; S-methyl-5-thio-alpha-D-ribose 1-phosphate from S-methyl-5'-thioadenosine (hydrolase route): step 1/2. Its function is as follows. Catalyzes the irreversible cleavage of the glycosidic bond in both 5'-methylthioadenosine (MTA) and S-adenosylhomocysteine (SAH/AdoHcy) to adenine and the corresponding thioribose, 5'-methylthioribose and S-ribosylhomocysteine, respectively. Also cleaves 5'-deoxyadenosine, a toxic by-product of radical S-adenosylmethionine (SAM) enzymes, into 5-deoxyribose and adenine. The polypeptide is 5'-methylthioadenosine/S-adenosylhomocysteine nucleosidase (Listeria monocytogenes serotype 4b (strain F2365)).